The primary structure comprises 217 residues: MELVLGPLEARVIGCLIEKEICTPDQYPLSLNALVNACNQKSNREPVLELSELDIRAVVDELIRKRLVVNTAGFNARVPRYQHRFCNTEFGELKFTAQELGIICELLLRGPQTPGELRSRTNRLCSFDDVTQVDAVLAKLAEQGPYVVKLPREPGKRESRYAHLFSGEVDLQALAEAAPASSYASPAADRLTALEEEVESLKAQLQLLAERLAQLEG.

It belongs to the UPF0502 family.

The sequence is that of UPF0502 protein AHA_2872 from Aeromonas hydrophila subsp. hydrophila (strain ATCC 7966 / DSM 30187 / BCRC 13018 / CCUG 14551 / JCM 1027 / KCTC 2358 / NCIMB 9240 / NCTC 8049).